A 261-amino-acid polypeptide reads, in one-letter code: MRLYRDRAVVLRQHKLGEADRIVTLLTRQHGLVRAVAKGVRRTRSKFGSRLEPFAHIDVQLHPGRNLDIVTQVQAIDAFAADIVSDYGRYTTACAILETAERIAGEERAPAVALHRLTVGALRAIADQQRSRELILDAYLLRAMSIAGWAPAIGECARCATPGPHRAFHVAAGGSVCVHCRPAGAVTPPQGVLELMAALHDGDWAATDDVPQTQRTQASGLIAAHLQWHLERKLRTLPLVERGSRLNMSHGEEQPARSAAG.

The protein belongs to the RecO family.

Its function is as follows. Involved in DNA repair and RecF pathway recombination. This is DNA repair protein RecO from Mycobacteroides abscessus (strain ATCC 19977 / DSM 44196 / CCUG 20993 / CIP 104536 / JCM 13569 / NCTC 13031 / TMC 1543 / L948) (Mycobacterium abscessus).